The chain runs to 253 residues: MSFSVHNQKGSKRPLPLEPLLFLQVPRSNYLHFQEEKQRLHLKKFLLDRMFLVAKIQANVERKDVADYYEQMFQSVLKHHLGEAVTGLLLIYPTSILHILESSSDTLYKVLLDYIGHVKDETVFFIQQMKIIVISHNIPMRLFMQWHVSVIKVPVMYLDDVTQSQSLKEVITDFLTQTHKLSLYLCQTMKVGTKGPGDNLHQVAPDLLLPEQIIKYLCKSEEFMDPATFINMYNRPIHITLDSEVVWPAPSRF.

As to expression, testis-specific.

The polypeptide is Testis-expressed protein 47 (Homo sapiens (Human)).